A 486-amino-acid polypeptide reads, in one-letter code: Bifunctional protein GlmU (486 aa).

A pyrophosphorylase region spans residues 1 to 236 (MTDQNLAIVV…SWLVDGINDR (236 aa)). UDP-N-acetyl-alpha-D-glucosamine-binding positions include 11–14 (LAAG), Lys25, Gln78, and 83–84 (GT). Residue Asp109 coordinates Mg(2+). Residues Gly146, Glu161, Asn176, and Asn234 each contribute to the UDP-N-acetyl-alpha-D-glucosamine site. Asn234 contributes to the Mg(2+) binding site. The tract at residues 237–257 (AQLSEAAAKLNALTVRAWQLA) is linker. An N-acetyltransferase region spans residues 258-486 (GVTVQDPATT…ASNAAEESGE (229 aa)). UDP-N-acetyl-alpha-D-glucosamine contacts are provided by Arg339 and Lys357. Catalysis depends on His369, which acts as the Proton acceptor. Positions 372 and 383 each coordinate UDP-N-acetyl-alpha-D-glucosamine. Residues Ala386, 392 to 393 (NY), and Ala429 each bind acetyl-CoA. A disordered region spans residues 459-486 (RRPGTDAARAAQRNGAAEASNAAEESGE). A compositionally biased stretch (low complexity) spans 465–486 (AARAAQRNGAAEASNAAEESGE).

The protein in the N-terminal section; belongs to the N-acetylglucosamine-1-phosphate uridyltransferase family. This sequence in the C-terminal section; belongs to the transferase hexapeptide repeat family. In terms of assembly, homotrimer. Requires Mg(2+) as cofactor.

The protein resides in the cytoplasm. The catalysed reaction is alpha-D-glucosamine 1-phosphate + acetyl-CoA = N-acetyl-alpha-D-glucosamine 1-phosphate + CoA + H(+). The enzyme catalyses N-acetyl-alpha-D-glucosamine 1-phosphate + UTP + H(+) = UDP-N-acetyl-alpha-D-glucosamine + diphosphate. It functions in the pathway nucleotide-sugar biosynthesis; UDP-N-acetyl-alpha-D-glucosamine biosynthesis; N-acetyl-alpha-D-glucosamine 1-phosphate from alpha-D-glucosamine 6-phosphate (route II): step 2/2. Its pathway is nucleotide-sugar biosynthesis; UDP-N-acetyl-alpha-D-glucosamine biosynthesis; UDP-N-acetyl-alpha-D-glucosamine from N-acetyl-alpha-D-glucosamine 1-phosphate: step 1/1. It participates in bacterial outer membrane biogenesis; LPS lipid A biosynthesis. Its function is as follows. Catalyzes the last two sequential reactions in the de novo biosynthetic pathway for UDP-N-acetylglucosamine (UDP-GlcNAc). The C-terminal domain catalyzes the transfer of acetyl group from acetyl coenzyme A to glucosamine-1-phosphate (GlcN-1-P) to produce N-acetylglucosamine-1-phosphate (GlcNAc-1-P), which is converted into UDP-GlcNAc by the transfer of uridine 5-monophosphate (from uridine 5-triphosphate), a reaction catalyzed by the N-terminal domain. This chain is Bifunctional protein GlmU, found in Leifsonia xyli subsp. xyli (strain CTCB07).